The sequence spans 975 residues: Sporulation-specific protein 22 (975 aa).

It belongs to the SPO22 family.

Involved in chromosome segregation during sporulation. The polypeptide is Sporulation-specific protein 22 (SPO22) (Saccharomyces cerevisiae (strain ATCC 204508 / S288c) (Baker's yeast)).